We begin with the raw amino-acid sequence, 204 residues long: Glycerol-3-phosphate acyltransferase (204 aa).

Helical transmembrane passes span 8-28 (ILIF…CYIF), 53-73 (VPAA…VVIA), 81-101 (FITA…IFFG), 116-136 (FGFS…VAII), and 155-175 (VIFT…IIIL).

Belongs to the PlsY family. As to quaternary structure, probably interacts with PlsX.

It is found in the cell inner membrane. The enzyme catalyses an acyl phosphate + sn-glycerol 3-phosphate = a 1-acyl-sn-glycero-3-phosphate + phosphate. It functions in the pathway lipid metabolism; phospholipid metabolism. Functionally, catalyzes the transfer of an acyl group from acyl-phosphate (acyl-PO(4)) to glycerol-3-phosphate (G3P) to form lysophosphatidic acid (LPA). This enzyme utilizes acyl-phosphate as fatty acyl donor, but not acyl-CoA or acyl-ACP. The chain is Glycerol-3-phosphate acyltransferase from Francisella tularensis subsp. holarctica (strain FTNF002-00 / FTA).